The following is a 303-amino-acid chain: Probable 5-dehydro-4-deoxyglucarate dehydratase (303 aa).

It belongs to the DapA family.

The enzyme catalyses 5-dehydro-4-deoxy-D-glucarate + H(+) = 2,5-dioxopentanoate + CO2 + H2O. The protein operates within carbohydrate acid metabolism; D-glucarate degradation; 2,5-dioxopentanoate from D-glucarate: step 2/2. This Leptothrix cholodnii (strain ATCC 51168 / LMG 8142 / SP-6) (Leptothrix discophora (strain SP-6)) protein is Probable 5-dehydro-4-deoxyglucarate dehydratase.